Consider the following 683-residue polypeptide: MSPHPEAITDCVTLNTVGQLAEGGYPLRFSTLFQEQQKMNISQASVSFKDVTIEFTQEEWQQMAPVQKNLYRDVMLENYSNLVSVGYCCFKPEVIFKLEQGEEPWFSEEEFSNQSHPKDYRGDDLIKQNKKIKDKHLEQAICINNKTLTTEEEKVLGKPFTLHVAAVASTKMSCKCNSWEVNLQSISEFIINNRNYSTKKIGCGNVCENSPFKINFEKTQTGEKFYEHNKNMKALNYNENLPKHPKFQTLEQAFECNKIGKAFNDKANCVKHNSSHTGETSSKDDEFRKNCDKKTLFDHRRTGTGKKHLHLNQCGKSFEKSTVEEYNKLNMGIKHYELNPSGNNFNRKAHLTDPQTAVIEENPLVSNDRTQTWVKSSEYHENKKSYQTSVHRVRRRSHSMMKPYKCNECGKSFCQKGHLIQHQRTHTGEKPFECSECGKTFSQKSHLSTHQRIHTAEKPYKCNECGKTFVQKSTLRGHQRIHTGEKPYECSECGKTFVQKSTLRDHHRIHTGEKSFQCNQCGKTFGQKSNLRIHQRTHTGEKTYQCNECEKSFWRKDHLIQHQKTHTGEKPFKCNECGKTFARTSTLRVHQRIHTGEKPFKCNECGKKFVRKAILSDHQRIHTGEKPFQCNKCGKTFGQKSNLRIHQRTHSGEKSYECNEYGKLCKKSTLSLYQKIQGEGNPY.

Residues 46–117 (VSFKDVTIEF…EEEFSNQSHP (72 aa)) form the KRAB domain. The C2H2-type 1; degenerate zinc-finger motif lies at 254–276 (FECNKIGKAFNDKANCVKHNSSH). 9 C2H2-type zinc fingers span residues 404–426 (YKCN…QRTH), 432–454 (FECS…QRIH), 460–482 (YKCN…QRIH), 488–510 (YECS…HRIH), 516–538 (FQCN…QRTH), 544–566 (YQCN…QKTH), 572–594 (FKCN…QRIH), 600–622 (FKCN…QRIH), and 628–650 (FQCN…QRTH).

The protein belongs to the krueppel C2H2-type zinc-finger protein family.

The protein resides in the nucleus. In terms of biological role, may be involved in transcriptional regulation. The sequence is that of Zinc finger protein 510 (ZNF510) from Homo sapiens (Human).